A 160-amino-acid polypeptide reads, in one-letter code: MAEKKNILTYEGLKQLEDELQDLKVNKRKEVSQKIKEAREQGDLSENAEYDAAKDEQRDIEARIEEIDKILKNAEVVVEDEVDVDTVNIGCLVRILDMEFNDELEYKIVGSTEANSLKGKISNESPVGKALIGARKDDVIEIEINGNSFKYKVLEIQKSN.

Residues 2–81 (AEKKNILTYE…KNAEVVVEDE (80 aa)) are a coiled coil. The disordered stretch occupies residues 36-55 (KEAREQGDLSENAEYDAAKD).

This sequence belongs to the GreA/GreB family.

Necessary for efficient RNA polymerase transcription elongation past template-encoded arresting sites. The arresting sites in DNA have the property of trapping a certain fraction of elongating RNA polymerases that pass through, resulting in locked ternary complexes. Cleavage of the nascent transcript by cleavage factors such as GreA or GreB allows the resumption of elongation from the new 3'terminus. GreA releases sequences of 2 to 3 nucleotides. The sequence is that of Transcription elongation factor GreA from Lachnoclostridium phytofermentans (strain ATCC 700394 / DSM 18823 / ISDg) (Clostridium phytofermentans).